We begin with the raw amino-acid sequence, 412 residues long: 43 kDa receptor-associated protein of the synapse (412 aa).

A lipid anchor (N-myristoyl glycine) is attached at G2. TPR repeat units follow at residues 6–39 (TKQQ…SADP), 83–116 (TEGY…QGTT), 123–156 (GQVS…AHNN), 163–196 (CRVC…VNDY), 206–239 (AMSQ…ALQH), 246–279 (ALCL…MTEI), and 286–319 (IQVL…AEGL). At Y196 the chain carries Phosphotyrosine. An RING-type zinc finger spans residues 363–403 (CGMCGESIGEKNNQLQALPCSHFFHLKCLQTNGTRGCPNCR).

The protein belongs to the RAPsyn family. As to expression, expressed in muscle fibers and in neurons.

It is found in the cell membrane. Its subcellular location is the postsynaptic cell membrane. It localises to the cytoplasm. The protein resides in the cytoskeleton. Its function is as follows. Postsynaptic protein required for clustering of nicotinic acetylcholine receptors (nAChRs) at the neuromuscular junction. It may link the receptor to the underlying postsynaptic cytoskeleton, possibly by direct association with actin or spectrin. The sequence is that of 43 kDa receptor-associated protein of the synapse (RAPSN) from Gallus gallus (Chicken).